We begin with the raw amino-acid sequence, 203 residues long: MDKAFDEIIGNSHTDSSSNHKVTRYRRRDLRNELGPRLGFAPSDAASRSKDRLYREREEPPLPKRIRISKIPLDVSDYTLDDMIKEFGSPIFSKIFDNKEDRTCIYEFEDPEVLEKIVERYNGHELHNAKIEVEIYQPQRKHSRMNAHNRRKQTAQEHGRGRPGSHYRQKPNRVSKKNKGREKNNTPTSVEALDAELDAYMKG.

N-acetylmethionine is present on methionine 1. Disordered stretches follow at residues 1 to 60 (MDKA…REEP) and 137 to 203 (QPQR…YMKG). Residues 11–20 (NSHTDSSSNH) are compositionally biased toward polar residues. Residues 47–60 (SRSKDRLYREREEP) are compositionally biased toward basic and acidic residues. In terms of domain architecture, RRM spans 64–138 (KRIRISKIPL…AKIEVEIYQP (75 aa)). Basic residues-rich tracts occupy residues 139 to 153 (QRKH…RRKQ) and 161 to 180 (GRPG…KNKG).

This sequence belongs to the YRA1 family. As to quaternary structure, associates with mRNPs. Interacts with YRA1.

The protein resides in the nucleus. Its function is as follows. Involved in export of poly(A) mRNAs from the nucleus. Recruited to the coding sequences as well as poly-A sites of active genes. This Saccharomyces cerevisiae (strain JAY291) (Baker's yeast) protein is RNA annealing protein YRA2 (YRA2).